A 542-amino-acid polypeptide reads, in one-letter code: Probable cysteine proteinase 361L (542 aa).

Catalysis depends on residues C172, H382, and N414. The helical transmembrane segment at 520-540 threads the bilayer; it reads TNNWYIYALIIIFILIIFFVL.

The protein belongs to the peptidase C1 family.

The protein localises to the membrane. In terms of biological role, probable cysteine protease. The polypeptide is Probable cysteine proteinase 361L (Acheta domesticus (House cricket)).